Reading from the N-terminus, the 724-residue chain is Methionine--tRNA ligase (724 aa).

The 'HIGH' region motif lies at 12–22; it reads PYVNNIPHLGN. Zn(2+) contacts are provided by cysteine 143, cysteine 146, cysteine 155, and cysteine 158. The 'KMSKS' region motif lies at 330 to 334; it reads KFSKS. Residue lysine 333 coordinates ATP. The region spanning 560 to 665 is the tRNA-binding domain; that stretch reads FREKVLLKVV…KNPIPGERII (106 aa).

It belongs to the class-I aminoacyl-tRNA synthetase family. MetG type 1 subfamily. Homodimer. Requires Zn(2+) as cofactor.

It is found in the cytoplasm. It carries out the reaction tRNA(Met) + L-methionine + ATP = L-methionyl-tRNA(Met) + AMP + diphosphate. In terms of biological role, is required not only for elongation of protein synthesis but also for the initiation of all mRNA translation through initiator tRNA(fMet) aminoacylation. This is Methionine--tRNA ligase from Borrelia garinii subsp. bavariensis (strain ATCC BAA-2496 / DSM 23469 / PBi) (Borreliella bavariensis).